Here is a 236-residue protein sequence, read N- to C-terminus: 1-(5-phosphoribosyl)-5-[(5-phosphoribosylamino)methylideneamino] imidazole-4-carboxamide isomerase (236 aa).

Asp-8 serves as the catalytic Proton acceptor. Catalysis depends on Asp-129, which acts as the Proton donor.

Belongs to the HisA/HisF family.

The protein localises to the cytoplasm. The enzyme catalyses 1-(5-phospho-beta-D-ribosyl)-5-[(5-phospho-beta-D-ribosylamino)methylideneamino]imidazole-4-carboxamide = 5-[(5-phospho-1-deoxy-D-ribulos-1-ylimino)methylamino]-1-(5-phospho-beta-D-ribosyl)imidazole-4-carboxamide. It functions in the pathway amino-acid biosynthesis; L-histidine biosynthesis; L-histidine from 5-phospho-alpha-D-ribose 1-diphosphate: step 4/9. The sequence is that of 1-(5-phosphoribosyl)-5-[(5-phosphoribosylamino)methylideneamino] imidazole-4-carboxamide isomerase from Ruminiclostridium cellulolyticum (strain ATCC 35319 / DSM 5812 / JCM 6584 / H10) (Clostridium cellulolyticum).